The sequence spans 59 residues: Mitochondrial sheath formation-associated protein (59 aa).

At 1 to 6 (MIVLGW) the chain is on the mitochondrial intermembrane side. The next 2 membrane-spanning stretches (helical) occupy residues 2–22 (IVLGWMFFVGLVCYMGTFPEL) and 7–23 (MFFVGLVCYMGTFPELM). Topologically, residues 24-40 (PPTLKWQERWPVQESKT) are cytoplasmic.

In terms of assembly, interacts with VDAC3.

The protein resides in the mitochondrion outer membrane. Regulates sperm development. May be involved in mitochondrial sheath formation. The sequence is that of Mitochondrial sheath formation-associated protein from Homo sapiens (Human).